The sequence spans 210 residues: V-type sodium ATPase subunit D (210 aa).

It belongs to the V-ATPase D subunit family.

Involved in ATP-driven sodium extrusion. The sequence is that of V-type sodium ATPase subunit D (ntpD) from Enterococcus hirae (strain ATCC 9790 / DSM 20160 / JCM 8729 / LMG 6399 / NBRC 3181 / NCIMB 6459 / NCDO 1258 / NCTC 12367 / WDCM 00089 / R).